The primary structure comprises 497 residues: Guanosine-5'-triphosphate,3'-diphosphate pyrophosphatase (497 aa).

It belongs to the GppA/Ppx family. GppA subfamily.

It carries out the reaction guanosine 3'-diphosphate 5'-triphosphate + H2O = guanosine 3',5'-bis(diphosphate) + phosphate + H(+). It functions in the pathway purine metabolism; ppGpp biosynthesis; ppGpp from GTP: step 2/2. Its function is as follows. Catalyzes the conversion of pppGpp to ppGpp. Guanosine pentaphosphate (pppGpp) is a cytoplasmic signaling molecule which together with ppGpp controls the 'stringent response', an adaptive process that allows bacteria to respond to amino acid starvation, resulting in the coordinated regulation of numerous cellular activities. This is Guanosine-5'-triphosphate,3'-diphosphate pyrophosphatase from Vibrio vulnificus (strain YJ016).